The chain runs to 418 residues: MQTEATFILGDWEITVSNCRFTCSSLTCGPLYRSSGDYTRLRIPFSLDRLIRDHAIFGLVPNIEDLLTHGSCVAVVADANATGGNARRIVAPGVINNFSEPIGIWVRGPPPQTRKEAIKFCIFFVSPLPPREMTTYVFKGGDLPPGAEEPETLHSAEAPLPSRETLVTGQLRSTSPRTYTGYFHSPVPLSFLDLLTFESMGCENVEGDPEPLTPKYLTFTQTGERLYKVTVHNTHSTACKKARIRFVYRPTPSARQLVMGQASPLITTPLGARVFAVYPDCEKTIPPQETTTLRIQLLFEQHGANAGECAFVIMGLARETKFVSFPAVLLPGKHEHLTVFNPQTHPLTIQRDTIVGVAMACYIHPGKAASQAPYSFYDCKEESWHVGLFQIKHGPGGVCTPPCHVAIRADRHEEPMQS.

This chain is Protein ORF10 (ORF10), found in Human herpesvirus 8 type P (isolate GK18) (HHV-8).